The sequence spans 389 residues: Chorismate synthase (389 aa).

R39 and R45 together coordinate NADP(+). Residues 130-132 (RSS), 251-252 (NA), G296, 311-315 (KPIPT), and R338 each bind FMN.

This sequence belongs to the chorismate synthase family. As to quaternary structure, homotetramer. It depends on FMNH2 as a cofactor.

It carries out the reaction 5-O-(1-carboxyvinyl)-3-phosphoshikimate = chorismate + phosphate. It participates in metabolic intermediate biosynthesis; chorismate biosynthesis; chorismate from D-erythrose 4-phosphate and phosphoenolpyruvate: step 7/7. Functionally, catalyzes the anti-1,4-elimination of the C-3 phosphate and the C-6 proR hydrogen from 5-enolpyruvylshikimate-3-phosphate (EPSP) to yield chorismate, which is the branch point compound that serves as the starting substrate for the three terminal pathways of aromatic amino acid biosynthesis. This reaction introduces a second double bond into the aromatic ring system. This chain is Chorismate synthase, found in Oceanobacillus iheyensis (strain DSM 14371 / CIP 107618 / JCM 11309 / KCTC 3954 / HTE831).